The sequence spans 862 residues: MKPRPYSVFLFLHIVFYSLLSAVNGSPSLDYFETCSNFVPRAGIPTFSPYAVIKNFDEVNRMYYIQVVGNLSGVITIVGGNGSHIHAASVYSETYALGKLVTSNTTKLCDVVMDPHSFEVPIKCPWAAGSAAFMVKVPFKSTLSDYSKYELTTLTTRVIVVDGTPEKNVITCMKFGLSTTLYYFYPVISYLVVVSLAYVSFSIIYALFLNPWTGSLDPFKSIFNFNMDPDALRLTSLGFFDFVQYLQFAVSTAQVSVMFPKFYINIMAALSWGTALFRFPIFSEPAEYQFADFADLSVASSSYADYLPKSYGMYSFLDSIGIGTACWLPFLIVMVIYLFAALFVALLVIFLKWLMSRIFNETIAETRWDTWSFIAGSLIRLYFLTYFPTVAYMSFQFVAPPTGYEIIPVLWFIFFGIFIPVYLYMNLAFVEPSSKLLEDQTYLHLFGSIYNSFREERVMFWIFPIAVQFMRGITVGVIGSSGSAQLAIFFILEVANVVAYAYVRPHFPQTSMNTLNTFISTMRLITVILMIPLDPRLKVLGISRDLLAYAILFIHIMVCILFLLLSTQRFMEVSARLLGAKSESKGVPLDRPFGWARVFGINELRRRRLKDPYSNGNTMMFDHSTYNSNEMSVPLTPVSVCSNSLKKDGEAAPPKLFVQTNCIPPVTQASSLVPSKNNTASSSSLMLDSPVTPSSPYSTSQGYSFYRPPKPKSSVRKRDMDQLRALQLDFLNNKPNLLRHDVNYAVREADVYHPHVDTSIDSLSQISSQPFEMRPTAIPPPPKNAFQRAWQIVQSTAKSIWHSDPPKESEKGFVVLRSRPRPNLQKPLPQLHIEPSRDEQYSMERKKTDDSLAESAWSIPHP.

The first 25 residues, 1 to 25 (MKPRPYSVFLFLHIVFYSLLSAVNG), serve as a signal peptide directing secretion. Residues 26–61 (SPSLDYFETCSNFVPRAGIPTFSPYAVIKNFDEVNR) are Lumenal-facing. Residues 62–82 (MYYIQVVGNLSGVITIVGGNG) form a helical membrane-spanning segment. Topologically, residues 83–187 (SHIHAASVYS…STTLYYFYPV (105 aa)) are cytoplasmic. A helical transmembrane segment spans residues 188–208 (ISYLVVVSLAYVSFSIIYALF). Over 209-230 (LNPWTGSLDPFKSIFNFNMDPD) the chain is Lumenal. A helical transmembrane segment spans residues 231-250 (ALRLTSLGFFDFVQYLQFAV). Residues 251–256 (STAQVS) are Cytoplasmic-facing. Residues 257-277 (VMFPKFYINIMAALSWGTALF) traverse the membrane as a helical segment. Residues 278–329 (RFPIFSEPAEYQFADFADLSVASSSYADYLPKSYGMYSFLDSIGIGTACWLP) lie on the Lumenal side of the membrane. Residues 330–350 (FLIVMVIYLFAALFVALLVIF) traverse the membrane as a helical segment. Topologically, residues 351-372 (LKWLMSRIFNETIAETRWDTWS) are cytoplasmic. A helical transmembrane segment spans residues 373-393 (FIAGSLIRLYFLTYFPTVAYM). Topologically, residues 394–404 (SFQFVAPPTGY) are lumenal. The chain crosses the membrane as a helical span at residues 405–425 (EIIPVLWFIFFGIFIPVYLYM). The Cytoplasmic segment spans residues 426–457 (NLAFVEPSSKLLEDQTYLHLFGSIYNSFREER). Residues 458–480 (VMFWIFPIAVQFMRGITVGVIGS) form a helical membrane-spanning segment. The Lumenal portion of the chain corresponds to 481 to 483 (SGS). Residues 484–503 (AQLAIFFILEVANVVAYAYV) form a helical membrane-spanning segment. The Cytoplasmic segment spans residues 504-514 (RPHFPQTSMNT). A helical transmembrane segment spans residues 515 to 535 (LNTFISTMRLITVILMIPLDP). At 536–545 (RLKVLGISRD) the chain is on the lumenal side. The helical transmembrane segment at 546–566 (LLAYAILFIHIMVCILFLLLS) threads the bilayer. The Cytoplasmic portion of the chain corresponds to 567-862 (TQRFMEVSAR…AESAWSIPHP (296 aa)). The span at 668–686 (QASSLVPSKNNTASSSSLM) shows a compositional bias: polar residues. 2 disordered regions span residues 668-717 (QASS…SVRK) and 815-862 (VLRS…IPHP). Positions 689–700 (SPVTPSSPYSTS) are enriched in low complexity. Residues 834-850 (EPSRDEQYSMERKKTDD) show a composition bias toward basic and acidic residues.

The protein belongs to the transient receptor potential (TRP) ion channel family.

The protein localises to the cytoplasm. The protein resides in the golgi apparatus membrane. This is an uncharacterized protein from Schizosaccharomyces pombe (strain 972 / ATCC 24843) (Fission yeast).